A 341-amino-acid chain; its full sequence is Aspartate carbamoyltransferase catalytic subunit (341 aa).

Residues Arg-89 and Thr-90 each coordinate carbamoyl phosphate. Lys-117 contacts L-aspartate. Residues Arg-139, His-169, and Gln-172 each contribute to the carbamoyl phosphate site. Residues Arg-202 and Arg-257 each contribute to the L-aspartate site. 2 residues coordinate carbamoyl phosphate: Gly-298 and Pro-299.

Belongs to the aspartate/ornithine carbamoyltransferase superfamily. ATCase family. As to quaternary structure, heterododecamer (2C3:3R2) of six catalytic PyrB chains organized as two trimers (C3), and six regulatory PyrI chains organized as three dimers (R2).

It carries out the reaction carbamoyl phosphate + L-aspartate = N-carbamoyl-L-aspartate + phosphate + H(+). It functions in the pathway pyrimidine metabolism; UMP biosynthesis via de novo pathway; (S)-dihydroorotate from bicarbonate: step 2/3. In terms of biological role, catalyzes the condensation of carbamoyl phosphate and aspartate to form carbamoyl aspartate and inorganic phosphate, the committed step in the de novo pyrimidine nucleotide biosynthesis pathway. This is Aspartate carbamoyltransferase catalytic subunit from Paraburkholderia xenovorans (strain LB400).